Here is a 349-residue protein sequence, read N- to C-terminus: Anthranilate phosphoribosyltransferase (349 aa).

Residues G82, 85 to 86, 92 to 95, 110 to 118, and S122 contribute to the 5-phospho-alpha-D-ribose 1-diphosphate site; these read GD, NVST, and KHGNRGVSS. G82 provides a ligand contact to anthranilate. S94 contributes to the Mg(2+) binding site. N113 provides a ligand contact to anthranilate. Residue R168 coordinates anthranilate. Positions 227 and 228 each coordinate Mg(2+).

Belongs to the anthranilate phosphoribosyltransferase family. Homodimer. Requires Mg(2+) as cofactor.

The enzyme catalyses N-(5-phospho-beta-D-ribosyl)anthranilate + diphosphate = 5-phospho-alpha-D-ribose 1-diphosphate + anthranilate. It participates in amino-acid biosynthesis; L-tryptophan biosynthesis; L-tryptophan from chorismate: step 2/5. Its function is as follows. Catalyzes the transfer of the phosphoribosyl group of 5-phosphorylribose-1-pyrophosphate (PRPP) to anthranilate to yield N-(5'-phosphoribosyl)-anthranilate (PRA). This is Anthranilate phosphoribosyltransferase from Acinetobacter baumannii (strain ATCC 17978 / DSM 105126 / CIP 53.77 / LMG 1025 / NCDC KC755 / 5377).